A 722-amino-acid polypeptide reads, in one-letter code: Polyribonucleotide nucleotidyltransferase (722 aa).

Residues D487 and D493 each coordinate Mg(2+). The KH domain maps to 554-613 (PRIETFKIPTDKIREVIGTGGKVIREIVEKTGAKVNIEDDGTVKVASSDGESIKAAIKWI). The region spanning 623–691 (GEIYEGTVVK…DRGKTRLSMK (69 aa)) is the S1 motif domain. The segment at 697–722 (TGEDLEAKQKAEAKAEGEAPAQAAGE) is disordered. Positions 701–713 (LEAKQKAEAKAEG) are enriched in basic and acidic residues.

The protein belongs to the polyribonucleotide nucleotidyltransferase family. It depends on Mg(2+) as a cofactor.

It localises to the cytoplasm. The enzyme catalyses RNA(n+1) + phosphate = RNA(n) + a ribonucleoside 5'-diphosphate. Its function is as follows. Involved in mRNA degradation. Catalyzes the phosphorolysis of single-stranded polyribonucleotides processively in the 3'- to 5'-direction. The protein is Polyribonucleotide nucleotidyltransferase of Rhodopseudomonas palustris (strain TIE-1).